Consider the following 739-residue polypeptide: MICOS complex subunit Mic60 (739 aa).

Positions 23–63 (ANNRQFGGSSSGSGGREQGRRQQEEQGQQGDQGYQGYQSLP) are disordered. Residues 47 to 61 (EQGQQGDQGYQGYQS) are compositionally biased toward low complexity. A helical membrane pass occupies residues 69–89 (AGFGKVVLFVSPLAAVGGVIT). The segment at 154-219 (VTGLFGGGSG…PAAKPKDNPL (66 aa)) is disordered. Residues 163-198 (GDDKSKKSKVEPVKATPAEEKRPSKPSEVSKTEAKP) show a composition bias toward basic and acidic residues. A compositionally biased stretch (low complexity) spans 199–212 (VSKPAAAAAPAPAA). A coiled-coil region spans residues 283 to 339 (TAVATAERAAREAQEKIVACEIALSAAATAQNAKKVEAVRDKIKKLVDHIGNVKDEL).

The protein belongs to the MICOS complex subunit Mic60 family. As to quaternary structure, component of the mitochondrial contact site and cristae organizing system (MICOS) complex. Interacts with the mitochondria-shaping protein Opa1.

The protein resides in the mitochondrion inner membrane. In terms of biological role, component of the MICOS complex, a large protein complex of the mitochondrial inner membrane that plays crucial roles in the maintenance of crista junctions, inner membrane architecture, and formation of contact sites to the outer membrane. In Drosophila melanogaster (Fruit fly), this protein is MICOS complex subunit Mic60.